A 293-amino-acid polypeptide reads, in one-letter code: Phosphatidylserine decarboxylase proenzyme (293 aa).

Residues Asp90, His147, and Ser254 each act as charge relay system; for autoendoproteolytic cleavage activity in the active site. Ser254 functions as the Schiff-base intermediate with substrate; via pyruvic acid; for decarboxylase activity in the catalytic mechanism. A Pyruvic acid (Ser); by autocatalysis modification is found at Ser254.

The protein belongs to the phosphatidylserine decarboxylase family. PSD-B subfamily. Prokaryotic type I sub-subfamily. In terms of assembly, heterodimer of a large membrane-associated beta subunit and a small pyruvoyl-containing alpha subunit. Pyruvate is required as a cofactor. Is synthesized initially as an inactive proenzyme. Formation of the active enzyme involves a self-maturation process in which the active site pyruvoyl group is generated from an internal serine residue via an autocatalytic post-translational modification. Two non-identical subunits are generated from the proenzyme in this reaction, and the pyruvate is formed at the N-terminus of the alpha chain, which is derived from the carboxyl end of the proenzyme. The autoendoproteolytic cleavage occurs by a canonical serine protease mechanism, in which the side chain hydroxyl group of the serine supplies its oxygen atom to form the C-terminus of the beta chain, while the remainder of the serine residue undergoes an oxidative deamination to produce ammonia and the pyruvoyl prosthetic group on the alpha chain. During this reaction, the Ser that is part of the protease active site of the proenzyme becomes the pyruvoyl prosthetic group, which constitutes an essential element of the active site of the mature decarboxylase.

Its subcellular location is the cell membrane. It carries out the reaction a 1,2-diacyl-sn-glycero-3-phospho-L-serine + H(+) = a 1,2-diacyl-sn-glycero-3-phosphoethanolamine + CO2. It participates in phospholipid metabolism; phosphatidylethanolamine biosynthesis; phosphatidylethanolamine from CDP-diacylglycerol: step 2/2. Its function is as follows. Catalyzes the formation of phosphatidylethanolamine (PtdEtn) from phosphatidylserine (PtdSer). The sequence is that of Phosphatidylserine decarboxylase proenzyme from Yersinia enterocolitica serotype O:8 / biotype 1B (strain NCTC 13174 / 8081).